Reading from the N-terminus, the 195-residue chain is Cysteine/O-acetylserine efflux protein (195 aa).

Residues 1 to 7 (MTPTLLS) are Periplasmic-facing. The chain crosses the membrane as a helical span at residues 8–28 (AFWTYTLITAMTPGPNNILAL). Residues 29-46 (SSATSHGFRQSTRVLAGM) lie on the Cytoplasmic side of the membrane. The helical transmembrane segment at 47–67 (SLGFLIVMLLCAGISFSLAVI) threads the bilayer. Residues 68 to 69 (DP) are Periplasmic-facing. The chain crosses the membrane as a helical span at residues 70-90 (AAVHLLSWAGAAYIVWLAWKI). At 91-104 (ATSPTKEDGLQAKP) the chain is on the cytoplasmic side. The helical transmembrane segment at 105–125 (ISFWASFALQFVNVKIILYGV) threads the bilayer. Over 126-141 (TALSTFVLPQTQALSW) the chain is Periplasmic. Residues 142–162 (VVGVSVLLAMIGTFGNVCWAL) form a helical membrane-spanning segment. Over 163–176 (AGHLFQRLFRQYGR) the chain is Cytoplasmic. The helical transmembrane segment at 177 to 194 (QLNIVLALLLVYCAVRIF) threads the bilayer. Position 195 (tyrosine 195) is a topological domain, periplasmic.

The protein belongs to the Rht family.

The protein localises to the cell inner membrane. The enzyme catalyses O-acetyl-L-serine(in) = O-acetyl-L-serine(out). It carries out the reaction L-cysteine(in) = L-cysteine(out). In terms of biological role, exporter of O-acetylserine (OAS) and cysteine. This is Cysteine/O-acetylserine efflux protein (eamB) from Escherichia coli O9:H4 (strain HS).